Consider the following 337-residue polypeptide: Holliday junction branch migration complex subunit RuvB (337 aa).

The segment at 1–179 is large ATPase domain (RuvB-L); the sequence is MTHQVSVLHQ…FSFTGRVAYY (179 aa). Residues L18, R19, G60, K63, T64, S65, 126-128, R169, Y179, and R216 each bind ATP; that span reads EDY. T64 serves as a coordination point for Mg(2+). The segment at 180–250 is small ATPAse domain (RuvB-S); that stretch reads SDEDLATILR…VAEKALAMLL (71 aa). The tract at residues 253–337 is head domain (RuvB-H); the sequence is EWGLNEIDIK…DNLQSLGEEK (85 aa). DNA-binding residues include K308 and R313.

The protein belongs to the RuvB family. In terms of assembly, homohexamer. Forms an RuvA(8)-RuvB(12)-Holliday junction (HJ) complex. HJ DNA is sandwiched between 2 RuvA tetramers; dsDNA enters through RuvA and exits via RuvB. An RuvB hexamer assembles on each DNA strand where it exits the tetramer. Each RuvB hexamer is contacted by two RuvA subunits (via domain III) on 2 adjacent RuvB subunits; this complex drives branch migration. In the full resolvosome a probable DNA-RuvA(4)-RuvB(12)-RuvC(2) complex forms which resolves the HJ.

The protein localises to the cytoplasm. It catalyses the reaction ATP + H2O = ADP + phosphate + H(+). In terms of biological role, the RuvA-RuvB-RuvC complex processes Holliday junction (HJ) DNA during genetic recombination and DNA repair, while the RuvA-RuvB complex plays an important role in the rescue of blocked DNA replication forks via replication fork reversal (RFR). RuvA specifically binds to HJ cruciform DNA, conferring on it an open structure. The RuvB hexamer acts as an ATP-dependent pump, pulling dsDNA into and through the RuvAB complex. RuvB forms 2 homohexamers on either side of HJ DNA bound by 1 or 2 RuvA tetramers; 4 subunits per hexamer contact DNA at a time. Coordinated motions by a converter formed by DNA-disengaged RuvB subunits stimulates ATP hydrolysis and nucleotide exchange. Immobilization of the converter enables RuvB to convert the ATP-contained energy into a lever motion, pulling 2 nucleotides of DNA out of the RuvA tetramer per ATP hydrolyzed, thus driving DNA branch migration. The RuvB motors rotate together with the DNA substrate, which together with the progressing nucleotide cycle form the mechanistic basis for DNA recombination by continuous HJ branch migration. Branch migration allows RuvC to scan DNA until it finds its consensus sequence, where it cleaves and resolves cruciform DNA. This chain is Holliday junction branch migration complex subunit RuvB, found in Chlamydia abortus (strain DSM 27085 / S26/3) (Chlamydophila abortus).